Consider the following 2641-residue polypeptide: Prosolanapyrone synthase (2641 aa).

The Ketosynthase family 3 (KS3) domain occupies 14–440 (PEPIAIVGMG…GANGHCIIDD (427 aa)). Catalysis depends on for beta-ketoacyl synthase activity residues Cys187, His323, and His363. The segment at 456 to 515 (SIGHINGHTNGHTNGHTNGHTNGHTNGHTNGHTNGAHASDGHNGHHQNGMNGNSASHMSE) is disordered. The segment covering 461–490 (NGHTNGHTNGHTNGHTNGHTNGHTNGHTNG) has biased composition (low complexity). The tract at residues 619 to 920 (FVFTGQGAQW…KGPVGQISRS (302 aa)) is malonyl-CoA:ACP transacylase (MAT). The N-terminal hotdog fold stretch occupies residues 1011–1149 (HDLLGSKLPG…GRVRVIAGTS (139 aa)). Positions 1011–1309 (HDLLGSKLPG…GNLRCVTYTE (299 aa)) are dehydratase (DH) domain. The 303-residue stretch at 1011-1313 (HDLLGSKLPG…CVTYTEVLPS (303 aa)) folds into the PKS/mFAS DH domain. His1043 acts as the Proton acceptor; for dehydratase activity in catalysis. The tract at residues 1161-1313 (ARTLDTKAWY…CVTYTEVLPS (153 aa)) is C-terminal hotdog fold. The active-site Proton donor; for dehydratase activity is the Asp1227. A methyltransferase (MT) domain region spans residues 1477–1665 (TGAYPQLVRF…GAELVLDDYP (189 aa)). An enoyl reductase (ER) domain region spans residues 1894 to 2206 (GLLTSLYFKP…KGTHVGKLVV (313 aa)). The segment at 2231–2408 (NYLITGGLGG…STVSFGLIRD (178 aa)) is ketoreductase (KR) domain. Positions 2561-2639 (RTVALVTDAI…ILANKIVDGA (79 aa)) constitute a Carrier domain. The residue at position 2598 (Ser2598) is an O-(pantetheine 4'-phosphoryl)serine.

It participates in phytotoxin biosynthesis. Its function is as follows. Prosolanapyrone synthase; part of the gene cluster that mediates the biosynthesis of the phytotoxin solanapyrone, a causal agent of early blight disease of potato and tomato. The prosolanapyrone synthase sol1 is a polyketide synthase that produces the octaketide desmethylprosolanapyrone I via sequential condensations of 7 malonyl-CoA units with one acetyl-CoA unit, and one methylation step. The octaketide backbone is further methylated by the sol2 O-methyltransferase to yield prosolanapyrone I. Prosolanapyrone I is hydroxylated to prosolanapyrone II by the cytochrome P450 monooxygenase sol6. The solanapyrone synthase sol5 then catalyzes the oxidation of prosolanapyrone II and the subsequent Diels Alder cycloisomerization of the product prosolanapyrone III to solanapyrones A and D. Solanapyrones A and D are then converted into solanapyrones B and E, respectively, by the sol3 dehydrogenase. The protein is Prosolanapyrone synthase (sol1) of Alternaria solani.